Here is a 759-residue protein sequence, read N- to C-terminus: Arylphorin subunit C223 (759 aa).

The first 15 residues, 1–15, serve as a signal peptide directing secretion; the sequence is MKIAIVLLAIVGLAA.

It belongs to the hemocyanin family. As to quaternary structure, heterohexamer. Fat body.

It localises to the secreted. Its subcellular location is the extracellular space. In terms of biological role, arylphorin is a larval storage protein (LSP) which may serve as a storage protein used primarily as a source of aromatic amino acids for protein synthesis during metamorphosis. It is a constituent of the sclerotizing system of the cuticle, and serves as a carrier for ecdysteroid hormone. The sequence is that of Arylphorin subunit C223 from Calliphora vicina (Blue blowfly).